A 123-amino-acid chain; its full sequence is Small ribosomal subunit protein uS12 (123 aa).

A 3-methylthioaspartic acid modification is found at aspartate 89. The interval 102–123 (LDTSGVQDRRQRRSKYGAKRPK) is disordered. Residues 111–123 (RQRRSKYGAKRPK) show a composition bias toward basic residues.

This sequence belongs to the universal ribosomal protein uS12 family. In terms of assembly, part of the 30S ribosomal subunit. Contacts proteins S8 and S17. May interact with IF1 in the 30S initiation complex.

With S4 and S5 plays an important role in translational accuracy. In terms of biological role, interacts with and stabilizes bases of the 16S rRNA that are involved in tRNA selection in the A site and with the mRNA backbone. Located at the interface of the 30S and 50S subunits, it traverses the body of the 30S subunit contacting proteins on the other side and probably holding the rRNA structure together. The combined cluster of proteins S8, S12 and S17 appears to hold together the shoulder and platform of the 30S subunit. This Lawsonia intracellularis (strain PHE/MN1-00) protein is Small ribosomal subunit protein uS12.